Here is a 407-residue protein sequence, read N- to C-terminus: Peptidase T (407 aa).

Histidine 78 is a binding site for Zn(2+). Aspartate 80 is an active-site residue. Aspartate 139 serves as a coordination point for Zn(2+). Catalysis depends on glutamate 173, which acts as the Proton acceptor. The Zn(2+) site is built by glutamate 174, aspartate 196, and histidine 378.

It belongs to the peptidase M20B family. Zn(2+) is required as a cofactor.

It localises to the cytoplasm. It catalyses the reaction Release of the N-terminal residue from a tripeptide.. Its function is as follows. Cleaves the N-terminal amino acid of tripeptides. The polypeptide is Peptidase T (Shewanella halifaxensis (strain HAW-EB4)).